The primary structure comprises 319 residues: Ferrochelatase (319 aa).

Residues histidine 193 and glutamate 274 each coordinate Fe cation.

This sequence belongs to the ferrochelatase family.

It is found in the cytoplasm. The catalysed reaction is heme b + 2 H(+) = protoporphyrin IX + Fe(2+). Its pathway is porphyrin-containing compound metabolism; protoheme biosynthesis; protoheme from protoporphyrin-IX: step 1/1. In terms of biological role, catalyzes the ferrous insertion into protoporphyrin IX. This Actinobacillus pleuropneumoniae serotype 5b (strain L20) protein is Ferrochelatase.